Consider the following 89-residue polypeptide: Small ribosomal subunit protein uS15 (89 aa).

It belongs to the universal ribosomal protein uS15 family. In terms of assembly, part of the 30S ribosomal subunit. Forms a bridge to the 50S subunit in the 70S ribosome, contacting the 23S rRNA.

Functionally, one of the primary rRNA binding proteins, it binds directly to 16S rRNA where it helps nucleate assembly of the platform of the 30S subunit by binding and bridging several RNA helices of the 16S rRNA. In terms of biological role, forms an intersubunit bridge (bridge B4) with the 23S rRNA of the 50S subunit in the ribosome. The protein is Small ribosomal subunit protein uS15 of Shewanella piezotolerans (strain WP3 / JCM 13877).